Here is a 1080-residue protein sequence, read N- to C-terminus: Histone deacetylase 4 (1080 aa).

Disordered regions lie at residues 1–25 (MSSQSHPDGLSGRDQPVELLNPPRV), 132–165 (KLEQHRQEQELEKQHREQKLQQLKNKEKGKESAV), and 205–312 (TQHS…ISAE). Residues 132-162 (KLEQHRQEQELEKQHREQKLQQLKNKEKGKE) show a composition bias toward basic and acidic residues. Over residues 205-224 (TQHSSLDQSSPPQSGVSGTY) the composition is skewed to polar residues. 2 stretches are compositionally biased toward basic and acidic residues: residues 233-244 (DSKDDFPLRKTA) and 258-273 (KVAERRSSPLLRRKDG). Positions 289–312 (SACNSAPGSGPSSPNNSSNNISAE) are enriched in low complexity. The short motif at 348–353 (PSLPNI) is the PxLPxI/L element. 3 disordered regions span residues 506 to 527 (KPNEPARQHESHPEETEEELRE), 558 to 579 (EPIESDEEEAEPQQELESGQRQ), and 622 to 646 (PLSRAQSSPASATFPMSVQEPPTKP). Basic and acidic residues predominate over residues 509-527 (EPARQHESHPEETEEELRE). The segment covering 560–571 (IESDEEEAEPQQ) has biased composition (acidic residues). The span at 625-637 (RAQSSPASATFPM) shows a compositional bias: polar residues. Positions 651–1080 (GLVYDTLMLK…DEPMEEEPPL (430 aa)) are histone deacetylase. Zn(2+) is bound by residues C663, C665, H671, and C747. Residue H799 is part of the active site. The tract at residues 1055 to 1080 (MASLSVGVKPAEKRPDDEPMEEEPPL) is disordered.

The protein belongs to the histone deacetylase family. HD type 2 subfamily.

It is found in the nucleus. The catalysed reaction is N(6)-acetyl-L-lysyl-[histone] + H2O = L-lysyl-[histone] + acetate. Responsible for the deacetylation of lysine residues on the N-terminal part of the core histones (H2A, H2B, H3 and H4). Histone deacetylation gives a tag for epigenetic repression and plays an important role in transcriptional regulation, cell cycle progression and developmental events. Histone deacetylases act via the formation of large multiprotein complexes. The sequence is that of Histone deacetylase 4 (HDAC4) from Gallus gallus (Chicken).